The chain runs to 154 residues: Protein X (154 aa).

Residues 68–117 (PCALRFTSARSMETTVNAHQVLPKVLHKRTLGLSAMSTTDLEAYFKDCLF) are mitochondrial targeting sequence.

This sequence belongs to the orthohepadnavirus protein X family. May form homodimer. May interact with host CEBPA, CFLAR, CREB1, DDB1, E4F1, HBXIP, HSPD1/HSP60, NFKBIA, POLR2E and SMAD4. Interacts with host SMC5-SMC6 complex and induces its degradation. Interacts with host TRPC4AP; leading to prevent ubiquitination of TRPC4AP. Interacts with host PLSCR1; this interaction promotes ubiquitination and degradation of HBx and impairs HBx-mediated cell proliferation. Post-translationally, a fraction may be phosphorylated in insect cells and HepG2 cells, a human hepatoblastoma cell line. Phosphorylated in vitro by host protein kinase C or mitogen-activated protein kinase. N-acetylated in insect cells.

It localises to the host cytoplasm. The protein resides in the host nucleus. It is found in the host mitochondrion. Multifunctional protein that plays a role in silencing host antiviral defenses and promoting viral transcription. Does not seem to be essential for HBV infection. May be directly involved in development of cirrhosis and liver cancer (hepatocellular carcinoma). Most of cytosolic activities involve modulation of cytosolic calcium. The effect on apoptosis is controversial depending on the cell types in which the studies have been conducted. May induce apoptosis by localizing in mitochondria and causing loss of mitochondrial membrane potential. May also modulate apoptosis by binding host CFLAR, a key regulator of the death-inducing signaling complex (DISC). Promotes viral transcription by using the host E3 ubiquitin ligase DDB1 to target the SMC5-SMC6 complex to proteasomal degradation. This host complex would otherwise bind to viral episomal DNA, and prevents its transcription. Moderately stimulates transcription of many different viral and cellular transcription elements. Promoters and enhancers stimulated by HBx contain DNA binding sites for NF-kappa-B, AP-1, AP-2, c-EBP, ATF/CREB, or the calcium-activated factor NF-AT. In Homo sapiens (Human), this protein is Protein X.